A 534-amino-acid chain; its full sequence is Blue-light-activated protein (534 aa).

In terms of domain architecture, PAS spans Gly-20 to Arg-93. The residue at position 70 (Cys-70) is an S-4a-FMN cysteine. Residues Val-94 to Gln-148 form the PAC domain. A Histidine kinase domain is found at Gly-161–Glu-390. At His-164 the chain carries Phosphohistidine; by autocatalysis. A Response regulatory domain is found at Arg-411–Leu-527. Asp-461 is subject to 4-aspartylphosphate.

FMN binds covalently to cysteine after exposure to blue light and this bond is spontaneously broken in the dark.

The catalysed reaction is ATP + protein L-histidine = ADP + protein N-phospho-L-histidine.. Photosensitive kinase and response regulator that is involved in increased bacterial virulence upon exposure to light. The polypeptide is Blue-light-activated protein (Pseudomonas syringae pv. syringae (strain B728a)).